Consider the following 433-residue polypeptide: GTPase Obg (433 aa).

One can recognise an Obg domain in the interval 1 to 159 (MAITDYCECR…LNVSLEVKYL (159 aa)). Residues 160-329 (ANVGIVGFPN…LLDRVFELYN (170 aa)) enclose the OBG-type G domain. Residues 166–173 (GFPNSGKS), 191–195 (FTTLI), 212–215 (DIPG), 282–285 (NKID), and 310–312 (ISA) each bind GTP. The Mg(2+) site is built by S173 and T193. The OCT domain occupies 355 to 433 (TNENNNDPLN…FDGCEFVIND (79 aa)).

It belongs to the TRAFAC class OBG-HflX-like GTPase superfamily. OBG GTPase family. In terms of assembly, monomer. The cofactor is Mg(2+).

Its subcellular location is the cytoplasm. An essential GTPase which binds GTP, GDP and possibly (p)ppGpp with moderate affinity, with high nucleotide exchange rates and a fairly low GTP hydrolysis rate. Plays a role in control of the cell cycle, stress response, ribosome biogenesis and in those bacteria that undergo differentiation, in morphogenesis control. This Mycoplasma genitalium (strain ATCC 33530 / DSM 19775 / NCTC 10195 / G37) (Mycoplasmoides genitalium) protein is GTPase Obg.